Reading from the N-terminus, the 306-residue chain is Light-independent protochlorophyllide reductase iron-sulfur ATP-binding protein (306 aa).

The interval Met-1–Gln-31 is disordered. ATP is bound by residues Gly-50 to Thr-55 and Lys-79. Ser-54 lines the Mg(2+) pocket. Residues Cys-135 and Cys-169 each coordinate [4Fe-4S] cluster. Asn-220 to Arg-221 is a binding site for ATP.

The protein belongs to the NifH/BchL/ChlL family. In terms of assembly, homodimer. Protochlorophyllide reductase is composed of three subunits; BchL, BchN and BchB. It depends on [4Fe-4S] cluster as a cofactor.

The enzyme catalyses chlorophyllide a + oxidized 2[4Fe-4S]-[ferredoxin] + 2 ADP + 2 phosphate = protochlorophyllide a + reduced 2[4Fe-4S]-[ferredoxin] + 2 ATP + 2 H2O. Its pathway is porphyrin-containing compound metabolism; bacteriochlorophyll biosynthesis (light-independent). Component of the dark-operative protochlorophyllide reductase (DPOR) that uses Mg-ATP and reduced ferredoxin to reduce ring D of protochlorophyllide (Pchlide) to form chlorophyllide a (Chlide). This reaction is light-independent. The L component serves as a unique electron donor to the NB-component of the complex, and binds Mg-ATP. The protein is Light-independent protochlorophyllide reductase iron-sulfur ATP-binding protein of Jannaschia sp. (strain CCS1).